A 125-amino-acid chain; its full sequence is Small ribosomal subunit protein uS12 (125 aa).

Aspartate 89 bears the 3-methylthioaspartic acid mark.

The protein belongs to the universal ribosomal protein uS12 family. As to quaternary structure, part of the 30S ribosomal subunit. Contacts proteins S8 and S17. May interact with IF1 in the 30S initiation complex.

In terms of biological role, with S4 and S5 plays an important role in translational accuracy. Its function is as follows. Interacts with and stabilizes bases of the 16S rRNA that are involved in tRNA selection in the A site and with the mRNA backbone. Located at the interface of the 30S and 50S subunits, it traverses the body of the 30S subunit contacting proteins on the other side and probably holding the rRNA structure together. The combined cluster of proteins S8, S12 and S17 appears to hold together the shoulder and platform of the 30S subunit. In Clostridium novyi (strain NT), this protein is Small ribosomal subunit protein uS12.